Here is a 177-residue protein sequence, read N- to C-terminus: Adenine phosphoribosyltransferase (177 aa).

This sequence belongs to the purine/pyrimidine phosphoribosyltransferase family. In terms of assembly, homodimer.

It localises to the cytoplasm. The catalysed reaction is AMP + diphosphate = 5-phospho-alpha-D-ribose 1-diphosphate + adenine. Its pathway is purine metabolism; AMP biosynthesis via salvage pathway; AMP from adenine: step 1/1. Functionally, catalyzes a salvage reaction resulting in the formation of AMP, that is energically less costly than de novo synthesis. The polypeptide is Adenine phosphoribosyltransferase (Pelodictyon phaeoclathratiforme (strain DSM 5477 / BU-1)).